Reading from the N-terminus, the 136-residue chain is Ribosome-binding factor A (136 aa).

Positions 116–136 are disordered; the sequence is AGNHKASDEEESDDKGHEDEQ.

It belongs to the RbfA family. As to quaternary structure, monomer. Binds 30S ribosomal subunits, but not 50S ribosomal subunits or 70S ribosomes.

The protein resides in the cytoplasm. In terms of biological role, one of several proteins that assist in the late maturation steps of the functional core of the 30S ribosomal subunit. Associates with free 30S ribosomal subunits (but not with 30S subunits that are part of 70S ribosomes or polysomes). Required for efficient processing of 16S rRNA. May interact with the 5'-terminal helix region of 16S rRNA. In Lachnoclostridium phytofermentans (strain ATCC 700394 / DSM 18823 / ISDg) (Clostridium phytofermentans), this protein is Ribosome-binding factor A.